A 1042-amino-acid polypeptide reads, in one-letter code: Sarcoplasmic/endoplasmic reticulum calcium ATPase 2 (1042 aa).

The Cytoplasmic segment spans residues 1 to 48 (MENAHTKTVEEVLGHFGVNESTGLSLEQVKKLKERWGSNELPAEEGKT). Phosphoserine is present on Ser38. The chain crosses the membrane as a helical span at residues 49-69 (LLELVIEQFEDLLVRILLLAA). Topologically, residues 70–89 (CISFVLAWFEEGEETITAFV) are lumenal. A helical membrane pass occupies residues 90–110 (EPFVILLILVANAIVGVWQER). Over 111–253 (NAENAIEALK…QERTPLQQKL (143 aa)) the chain is Cytoplasmic. The helical transmembrane segment at 254 to 273 (DEFGEQLSKVISLICIAVWI) threads the bilayer. Residues 274–295 (INIGHFNDPVHGGSWIRGAIYY) lie on the Lumenal side of the membrane. 3'-nitrotyrosine occurs at positions 294 and 295. The helical transmembrane segment at 296–313 (FKIAVALAVAAIPEGLPA) threads the bilayer. Val304, Ala305, Ile307, and Glu309 together coordinate Ca(2+). Over 314–756 (VITTCLALGT…EEGRAIYNNM (443 aa)) the chain is Cytoplasmic. Asp351 acts as the 4-aspartylphosphate intermediate in catalysis. 2 residues coordinate Mg(2+): Asp351 and Thr353. Thr353 contacts ATP. Thr441 carries the phosphothreonine modification. Residues Glu442, Arg489, and Lys514 each coordinate ATP. Ser531 carries the post-translational modification Phosphoserine. An ATP-binding site is contributed by Arg559. The interval 575 to 594 (MHLKDSANFIKYETNLTFVG) is interaction with HAX1. Ser580 carries the phosphoserine modification. ATP-binding residues include Thr624, Gly625, and Asp626. Ser663 is subject to Phosphoserine. Residues Arg677 and Lys683 each coordinate ATP. Asp702 contacts Mg(2+). Asn705 lines the ATP pocket. A helical membrane pass occupies residues 757–776 (KQFIRYLISSNVGEVVCIFL). Ca(2+) contacts are provided by Asn767 and Glu770. Topologically, residues 777–786 (TAALGFPEAL) are lumenal. A helical transmembrane segment spans residues 787–807 (IPVQLLWVNLVTDGLPATALG). The interval 787–807 (IPVQLLWVNLVTDGLPATALG) is interaction with PLN. The interaction with TMEM64 and PDIA3 stretch occupies residues 788–1042 (PVQLLWVNLV…DTNFSDLLWS (255 aa)). The Ca(2+) site is built by Asn795, Thr798, and Asp799. Topologically, residues 808–827 (FNPPDLDIMNKPPRNPKEPL) are cytoplasmic. Residues 828–850 (ISGWLFFRYLAIGCYVGAATVGA) form a helical membrane-spanning segment. The Lumenal portion of the chain corresponds to 851 to 896 (AAWWFIAADGGPRVSFYQLSHFLQCKEDNPDFEGVDCAIFESPYPM). Cys875 and Cys887 are oxidised to a cystine. The chain crosses the membrane as a helical span at residues 897 to 916 (TMALSVLVTIEMCNALNSLS). Glu907 contacts Ca(2+). Residues 917-929 (ENQSLLRMPPWEN) are Cytoplasmic-facing. The helical transmembrane segment at 930–948 (IWLVGSICLSMSLHFLILY) threads the bilayer. An interaction with PLN region spans residues 931–942 (WLVGSICLSMSL). At 949–963 (VEPLPLIFQITPLNV) the chain is on the lumenal side. The helical transmembrane segment at 964–984 (TQWLMVLKISLPVILMDETLK) threads the bilayer. The Cytoplasmic portion of the chain corresponds to 985–1042 (FVARNYLEPGKECVQPAPQSCSLWACTEGVSWPFVLLIVPLVMWVYSTDTNFSDLLWS).

It belongs to the cation transport ATPase (P-type) (TC 3.A.3) family. Type IIA subfamily. In terms of assembly, interacts with sarcolipin (SLN); the interaction inhibits ATP2A2 Ca(2+) affinity. Interacts with phospholamban (PLN); the interaction inhibits ATP2A2 Ca(2+) affinity. Interacts with myoregulin (MRLN). Interacts with ARLN and ERLN; the interactions inhibit ATP2A2 Ca(2+) affinity. Interacts with SRTIT1/DWORF; the interaction results in activation of ATP2A2. Interacts with the monomeric forms of SLN, PLN, ARLN, ERLN and STRI1/DWORF. Interacts with HAX1. Interacts with S100A8 and S100A9. Interacts with SLC35G1 and STIM1. Interacts with TMEM203. Interacts with TMEM64 and PDIA3. Interacts with TMX1. Interacts with TMX2. Interacts with VMP1; VMP1 competes with PLN and SLN to prevent them from forming an inhibitory complex with ATP2A2. Interacts with ULK1. Interacts with TUNAR. Interacts with FLVCR2; this interaction occurs in the absence of heme and promotes ATP2A2 proteasomal degradation; this complex is dissociated upon heme binding. Interacts with FNIP1. As to quaternary structure, interacts with TRAM2 (via C-terminus). The cofactor is Mg(2+). Nitrated under oxidative stress. Nitration on the two tyrosine residues inhibits catalytic activity. In terms of processing, serotonylated on Gln residues by TGM2 in response to hypoxia, leading to its inactivation. In terms of tissue distribution, isoform 2 is highly expressed in heart and slow twitch skeletal muscle. Isoform 1 is widely expressed.

It is found in the endoplasmic reticulum membrane. Its subcellular location is the sarcoplasmic reticulum membrane. The catalysed reaction is Ca(2+)(in) + ATP + H2O = Ca(2+)(out) + ADP + phosphate + H(+). Has different conformational states with differential Ca2+ affinity. The E1 conformational state (active form) shows high Ca(2+) affinity, while the E2 state exhibits low Ca(2+) affinity. Binding of ATP allosterically increases its affinity for subsequent binding of Ca2+. Reversibly inhibited by phospholamban (PLN) at low calcium concentrations. PLN inhibits ATP2A2 Ca(2+) affinity by disrupting its allosteric activation by ATP. Inhibited by sarcolipin (SLN) and myoregulin (MRLN). The inhibition is blocked by VMP1. Enhanced by STRIT1/DWORF; STRIT1 increases activity by displacing sarcolipin (SLN), phospholamban (PLN) and myoregulin (MRLN). Stabilizes SERCA2 in its E2 state. In terms of biological role, this magnesium-dependent enzyme catalyzes the hydrolysis of ATP coupled with the translocation of calcium from the cytosol to the sarcoplasmic reticulum lumen. Involved in autophagy in response to starvation. Upon interaction with VMP1 and activation, controls ER-isolation membrane contacts for autophagosome formation. Also modulates ER contacts with lipid droplets, mitochondria and endosomes. In coordination with FLVCR2 mediates heme-stimulated switching from mitochondrial ATP synthesis to thermogenesis. Functionally, involved in the regulation of the contraction/relaxation cycle. Acts as a regulator of TNFSF11-mediated Ca(2+) signaling pathways via its interaction with TMEM64 which is critical for the TNFSF11-induced CREB1 activation and mitochondrial ROS generation necessary for proper osteoclast generation. Association between TMEM64 and SERCA2 in the ER leads to cytosolic Ca(2+) spiking for activation of NFATC1 and production of mitochondrial ROS, thereby triggering Ca(2+) signaling cascades that promote osteoclast differentiation and activation. The protein is Sarcoplasmic/endoplasmic reticulum calcium ATPase 2 (ATP2A2) of Oryctolagus cuniculus (Rabbit).